A 503-amino-acid chain; its full sequence is Probable cytosol aminopeptidase (503 aa).

Mn(2+)-binding residues include lysine 268 and aspartate 273. Lysine 280 is an active-site residue. Residues aspartate 291, aspartate 350, and glutamate 352 each coordinate Mn(2+). Residue arginine 354 is part of the active site.

The protein belongs to the peptidase M17 family. Mn(2+) serves as cofactor.

The protein resides in the cytoplasm. The catalysed reaction is Release of an N-terminal amino acid, Xaa-|-Yaa-, in which Xaa is preferably Leu, but may be other amino acids including Pro although not Arg or Lys, and Yaa may be Pro. Amino acid amides and methyl esters are also readily hydrolyzed, but rates on arylamides are exceedingly low.. It catalyses the reaction Release of an N-terminal amino acid, preferentially leucine, but not glutamic or aspartic acids.. In terms of biological role, presumably involved in the processing and regular turnover of intracellular proteins. Catalyzes the removal of unsubstituted N-terminal amino acids from various peptides. The protein is Probable cytosol aminopeptidase of Nocardia farcinica (strain IFM 10152).